We begin with the raw amino-acid sequence, 87 residues long: HssA/B-like protein 7 (87 aa).

Positions 1-22 are enriched in polar residues; sequence MSILSALTSISNPMKSTKSSVA. The interval 1 to 23 is disordered; it reads MSILSALTSISNPMKSTKSSVAN.

This sequence belongs to the hssA/B family.

The protein is HssA/B-like protein 7 (hssl7) of Dictyostelium discoideum (Social amoeba).